The sequence spans 523 residues: NAD(P)H-quinone oxidoreductase subunit 2 (523 aa).

The next 13 membrane-spanning stretches (helical) occupy residues 30–50 (VGPE…DLAG), 57–77 (WVPP…ALQW), 94–114 (LAIA…LISW), 128–148 (AAIL…TDLV), 182–202 (LLVG…LYGL), 223–243 (AALA…AVPF), 255–275 (PTPV…ALAL), 291–311 (LLFT…ALAQ), 317–337 (MLAY…VCGT), 345–365 (VLYM…IILF), 389–409 (LGLS…GFFG), 424–444 (VLVV…IGVI), and 477–497 (VALV…NPLF).

The protein belongs to the complex I subunit 2 family. NDH-1 can be composed of about 15 different subunits; different subcomplexes with different compositions have been identified which probably have different functions.

The protein localises to the cellular thylakoid membrane. It catalyses the reaction a plastoquinone + NADH + (n+1) H(+)(in) = a plastoquinol + NAD(+) + n H(+)(out). It carries out the reaction a plastoquinone + NADPH + (n+1) H(+)(in) = a plastoquinol + NADP(+) + n H(+)(out). Functionally, NDH-1 shuttles electrons from an unknown electron donor, via FMN and iron-sulfur (Fe-S) centers, to quinones in the respiratory and/or the photosynthetic chain. The immediate electron acceptor for the enzyme in this species is believed to be plastoquinone. Couples the redox reaction to proton translocation, and thus conserves the redox energy in a proton gradient. Cyanobacterial NDH-1 also plays a role in inorganic carbon-concentration. This is NAD(P)H-quinone oxidoreductase subunit 2 from Synechococcus sp. (strain CC9311).